The primary structure comprises 248 residues: tRNA pseudouridine synthase A (248 aa).

The Nucleophile role is filled by Asp53. Tyr111 serves as a coordination point for substrate.

Belongs to the tRNA pseudouridine synthase TruA family. As to quaternary structure, homodimer.

The catalysed reaction is uridine(38/39/40) in tRNA = pseudouridine(38/39/40) in tRNA. Functionally, formation of pseudouridine at positions 38, 39 and 40 in the anticodon stem and loop of transfer RNAs. The protein is tRNA pseudouridine synthase A of Listeria monocytogenes serovar 1/2a (strain ATCC BAA-679 / EGD-e).